The primary structure comprises 104 residues: Large ribosomal subunit protein uL24 (104 aa).

This sequence belongs to the universal ribosomal protein uL24 family. Part of the 50S ribosomal subunit.

Functionally, one of two assembly initiator proteins, it binds directly to the 5'-end of the 23S rRNA, where it nucleates assembly of the 50S subunit. In terms of biological role, one of the proteins that surrounds the polypeptide exit tunnel on the outside of the subunit. The sequence is that of Large ribosomal subunit protein uL24 from Clostridium botulinum (strain Eklund 17B / Type B).